A 151-amino-acid polypeptide reads, in one-letter code: Regulatory protein RecX (151 aa).

The protein belongs to the RecX family.

Its subcellular location is the cytoplasm. In terms of biological role, modulates RecA activity. The sequence is that of Regulatory protein RecX from Haemophilus ducreyi (strain 35000HP / ATCC 700724).